We begin with the raw amino-acid sequence, 57 residues long: Large ribosomal subunit protein bL32 (57 aa).

The segment covering 1-19 has biased composition (basic residues); the sequence is MATPKRRMSRANTRSRRSQ. The segment at 1–20 is disordered; that stretch reads MATPKRRMSRANTRSRRSQW.

The protein belongs to the bacterial ribosomal protein bL32 family.

The protein is Large ribosomal subunit protein bL32 of Mycobacterium marinum (strain ATCC BAA-535 / M).